Here is a 449-residue protein sequence, read N- to C-terminus: Exodeoxyribonuclease 7 large subunit (449 aa).

It belongs to the XseA family. Heterooligomer composed of large and small subunits.

Its subcellular location is the cytoplasm. It carries out the reaction Exonucleolytic cleavage in either 5'- to 3'- or 3'- to 5'-direction to yield nucleoside 5'-phosphates.. Functionally, bidirectionally degrades single-stranded DNA into large acid-insoluble oligonucleotides, which are then degraded further into small acid-soluble oligonucleotides. In Salmonella schwarzengrund (strain CVM19633), this protein is Exodeoxyribonuclease 7 large subunit.